A 338-amino-acid polypeptide reads, in one-letter code: Ketol-acid reductoisomerase (NADP(+)) (338 aa).

A KARI N-terminal Rossmann domain is found at 1 to 181; it reads MKVFYDKDAD…GGGRAGIIET (181 aa). NADP(+)-binding positions include 24–27, arginine 47, and serine 52; that span reads YGSQ. Histidine 107 is an active-site residue. Glycine 133 is a binding site for NADP(+). In terms of domain architecture, KARI C-terminal knotted spans 182–327; that stretch reads NFREETETDL…SKLRAMMPWI (146 aa). Positions 190, 194, 226, and 230 each coordinate Mg(2+). Position 251 (serine 251) interacts with substrate.

This sequence belongs to the ketol-acid reductoisomerase family. Mg(2+) is required as a cofactor.

The enzyme catalyses (2R)-2,3-dihydroxy-3-methylbutanoate + NADP(+) = (2S)-2-acetolactate + NADPH + H(+). It catalyses the reaction (2R,3R)-2,3-dihydroxy-3-methylpentanoate + NADP(+) = (S)-2-ethyl-2-hydroxy-3-oxobutanoate + NADPH + H(+). Its pathway is amino-acid biosynthesis; L-isoleucine biosynthesis; L-isoleucine from 2-oxobutanoate: step 2/4. The protein operates within amino-acid biosynthesis; L-valine biosynthesis; L-valine from pyruvate: step 2/4. Involved in the biosynthesis of branched-chain amino acids (BCAA). Catalyzes an alkyl-migration followed by a ketol-acid reduction of (S)-2-acetolactate (S2AL) to yield (R)-2,3-dihydroxy-isovalerate. In the isomerase reaction, S2AL is rearranged via a Mg-dependent methyl migration to produce 3-hydroxy-3-methyl-2-ketobutyrate (HMKB). In the reductase reaction, this 2-ketoacid undergoes a metal-dependent reduction by NADPH to yield (R)-2,3-dihydroxy-isovalerate. The sequence is that of Ketol-acid reductoisomerase (NADP(+)) from Burkholderia thailandensis (strain ATCC 700388 / DSM 13276 / CCUG 48851 / CIP 106301 / E264).